The primary structure comprises 98 residues: NADH-ubiquinone oxidoreductase chain 4L (98 aa).

3 helical membrane-spanning segments follow: residues 1–21 (MSLVHMNVIVAFTLSLVGLLM), 29–49 (ALLCMEGMMLSLFVLAALTIL), and 61–81 (IILLVFAACEAAIGLALLVTI).

The protein belongs to the complex I subunit 4L family. Core subunit of respiratory chain NADH dehydrogenase (Complex I) which is composed of 45 different subunits.

The protein localises to the mitochondrion inner membrane. The enzyme catalyses a ubiquinone + NADH + 5 H(+)(in) = a ubiquinol + NAD(+) + 4 H(+)(out). In terms of biological role, core subunit of the mitochondrial membrane respiratory chain NADH dehydrogenase (Complex I) which catalyzes electron transfer from NADH through the respiratory chain, using ubiquinone as an electron acceptor. Part of the enzyme membrane arm which is embedded in the lipid bilayer and involved in proton translocation. This is NADH-ubiquinone oxidoreductase chain 4L (MT-ND4L) from Ziphius cavirostris (Cuvier's beaked whale).